Reading from the N-terminus, the 278-residue chain is Endoplasmic reticulum junction formation protein lunapark (278 aa).

Topologically, residues 1–45 (MFSALGKWVRGSRNDKDFVTKYTADLSQITSQIHQLDVALKKSQS) are cytoplasmic. A helical transmembrane segment spans residues 46–66 (ILSQWQSNLTFYGIALTVLAL). The Lumenal segment spans residues 67–77 (SYTYWEYHGYR). The chain crosses the membrane as a helical span at residues 78-98 (PYLVVTALLCIGSLILFKWAL). Residues 99–278 (TKLYAFYNNN…PSQSEKEKTK (180 aa)) lie on the Cytoplasmic side of the membrane. Residues 107–183 (NNRLRKLAKL…ELEKFKKESH (77 aa)) are a coiled coil. The C4-type; plays a role in ER morphology zinc-finger motif lies at 223–247 (CPQCHWKSNCYRLASKPIIFICPHC). The segment at 258-278 (EDAIEAKQPAQPSQSEKEKTK) is disordered.

This sequence belongs to the lunapark family. Interacts with RTN1; this interaction is negatively regulated by SEY1. Interacts with SEY1 and YOP1.

The protein localises to the endoplasmic reticulum membrane. Functionally, plays a role in tubular endoplasmic reticulum network formation and maintenance. Works in conjunction with the ER shaping proteins (reticulons RTN1 and RTN2, YOP1), and in antagonism to SEY1 to maintain the network in a dynamic equilibrium. May counterbalance SEY1-directed polygon formation by promoting polygon loss through ring closure. The chain is Endoplasmic reticulum junction formation protein lunapark (LNP1) from Saccharomyces cerevisiae (strain ATCC 204508 / S288c) (Baker's yeast).